Reading from the N-terminus, the 229-residue chain is Flagellar L-ring protein 1 (229 aa).

An N-terminal signal peptide occupies residues 1-18 (MYLRKISAPLMTMLLLNG). Cys-19 carries N-palmitoyl cysteine lipidation. Cys-19 is lipidated: S-diacylglycerol cysteine.

This sequence belongs to the FlgH family. In terms of assembly, the basal body constitutes a major portion of the flagellar organelle and consists of four rings (L,P,S, and M) mounted on a central rod.

Its subcellular location is the cell outer membrane. The protein localises to the bacterial flagellum basal body. Its function is as follows. Assembles around the rod to form the L-ring and probably protects the motor/basal body from shearing forces during rotation. The sequence is that of Flagellar L-ring protein 1 (flgH1) from Yersinia pseudotuberculosis serotype I (strain IP32953).